Consider the following 238-residue polypeptide: Ribonuclease PH (238 aa).

Residues R86 and 124–126 contribute to the phosphate site; that span reads GTR.

The protein belongs to the RNase PH family. As to quaternary structure, homohexameric ring arranged as a trimer of dimers.

It carries out the reaction tRNA(n+1) + phosphate = tRNA(n) + a ribonucleoside 5'-diphosphate. Functionally, phosphorolytic 3'-5' exoribonuclease that plays an important role in tRNA 3'-end maturation. Removes nucleotide residues following the 3'-CCA terminus of tRNAs; can also add nucleotides to the ends of RNA molecules by using nucleoside diphosphates as substrates, but this may not be physiologically important. Probably plays a role in initiation of 16S rRNA degradation (leading to ribosome degradation) during starvation. This Solibacter usitatus (strain Ellin6076) protein is Ribonuclease PH.